The following is a 259-amino-acid chain: Dihydroorotate dehydrogenase B (NAD(+)), electron transfer subunit (259 aa).

An FAD-binding FR-type domain is found at 2-102; it reads MQKQNMIVVN…LGPLGHGFPV (101 aa). FAD is bound by residues 53 to 56, 70 to 72, and 77 to 78; these read RPIS, LYR, and GT. Cysteine 221, cysteine 226, cysteine 229, and cysteine 246 together coordinate [2Fe-2S] cluster.

This sequence belongs to the PyrK family. As to quaternary structure, heterotetramer of 2 PyrK and 2 PyrD type B subunits. It depends on [2Fe-2S] cluster as a cofactor. The cofactor is FAD.

Its pathway is pyrimidine metabolism; UMP biosynthesis via de novo pathway; orotate from (S)-dihydroorotate (NAD(+) route): step 1/1. Its function is as follows. Responsible for channeling the electrons from the oxidation of dihydroorotate from the FMN redox center in the PyrD type B subunit to the ultimate electron acceptor NAD(+). The sequence is that of Dihydroorotate dehydrogenase B (NAD(+)), electron transfer subunit from Bacillus cereus (strain 03BB102).